A 159-amino-acid polypeptide reads, in one-letter code: MLLTWLHHPILNSRIKLLSVRYLSLTAYMLLAICPIAVRLLELEDYDKRCRCNNQILLNTLPVGTELLKPIAASESCNRQEVLAILKDKGTKCLNPNAQAVRRHINRLFFRLVLDEEQRIYDVVSTNIEFGAWPVPTAYKAFLWKYAKKLNYHYFRLRW.

2 cysteine pairs are disulfide-bonded: cysteine 50–cysteine 77 and cysteine 52–cysteine 93.

It belongs to the intercrine alpha (chemokine CxC) family.

The chain is Putative viral CXC chemokine 2 (UL147) from Human cytomegalovirus (strain Merlin) (HHV-5).